We begin with the raw amino-acid sequence, 205 residues long: Recombination protein RecR (205 aa).

The C4-type zinc-finger motif lies at 60–75 (CKVCHNISDTETCRIC). Residues 83 to 178 (STICVVESIR…KLSVIARGIS (96 aa)) enclose the Toprim domain.

It belongs to the RecR family.

Its function is as follows. May play a role in DNA repair. It seems to be involved in an RecBC-independent recombinational process of DNA repair. It may act with RecF and RecO. The chain is Recombination protein RecR from Phocaeicola vulgatus (strain ATCC 8482 / DSM 1447 / JCM 5826 / CCUG 4940 / NBRC 14291 / NCTC 11154) (Bacteroides vulgatus).